The following is a 186-amino-acid chain: Threonylcarbamoyl-AMP synthase (186 aa).

The region spanning 2–186 (PNEFELAVAA…ARTGAIIRPS (185 aa)) is the YrdC-like domain.

Belongs to the SUA5 family. TsaC subfamily.

The protein resides in the cytoplasm. It catalyses the reaction L-threonine + hydrogencarbonate + ATP = L-threonylcarbamoyladenylate + diphosphate + H2O. Its function is as follows. Required for the formation of a threonylcarbamoyl group on adenosine at position 37 (t(6)A37) in tRNAs that read codons beginning with adenine. Catalyzes the conversion of L-threonine, HCO(3)(-)/CO(2) and ATP to give threonylcarbamoyl-AMP (TC-AMP) as the acyladenylate intermediate, with the release of diphosphate. The polypeptide is Threonylcarbamoyl-AMP synthase (Aeromonas hydrophila subsp. hydrophila (strain ATCC 7966 / DSM 30187 / BCRC 13018 / CCUG 14551 / JCM 1027 / KCTC 2358 / NCIMB 9240 / NCTC 8049)).